Here is a 116-residue protein sequence, read N- to C-terminus: Somatostatin (116 aa).

The N-terminal stretch at 1-24 (MLSCRLQCALAALCIVLALGGVTG) is a signal peptide. Residues 35 to 88 (LQKSLAAATGKQELAKYFLAELLSEPNQTENDALEPEDLPQAAEQDEMRLELQR) constitute a propeptide that is removed on maturation. Thr43 bears the Threonine amide mark. Cys105 and Cys116 are joined by a disulfide.

The protein belongs to the somatostatin family. C-terminal amidation of the neuronostatin peptide is required for its biological activity, including for the regulation of mean arterial pressure. In terms of tissue distribution, in the pancreas, somatostatin is expressed in delta cells of the islets of Langerhans. In the stomach, it is expressed in parietal cells of oxyntic mucosa and in the small intestine, it is found in the villus (at protein level). Neuronostatin is expressed in the pancreas in delta cells of the islets of Langerhans, as well as in the stomach, in parietal cells of oxyntic mucosa and in the small intestine, in the villus (at protein level).

It localises to the secreted. Functionally, inhibits the secretion of pituitary hormones, including that of growth hormone/somatotropin (GH1), PRL, ACTH, luteinizing hormone (LH) and TSH. Also impairs ghrelin- and GnRH-stimulated secretion of GH1 and LH; the inhibition of ghrelin-stimulated secretion of GH1 can be further increased by neuronostatin. Its function is as follows. May enhance low-glucose-induced glucagon release by pancreatic alpha cells. This effect may be mediated by binding to GPR107 and PKA activation. May regulate cardiac contractile function. May compromise cardiomyocyte viability. In the central nervous system, may impair memory retention and may affect hippocampal excitability. May also have anxiolytic and anorexigenic effects. May play a role in arterial pressure regulation. May inhibit basal, but not ghrelin- or GnRH-stimulated secretion of GH1 or LH, but does not affect the release of other pituitary hormones, including PRL, ACTH, FSH or TSH. Potentiates inhibitory action of somatostatin on ghrelin-stimulated secretion of GH1, but not that on GnRH-stimulated secretion of LH. The chain is Somatostatin (Sst) from Mus musculus (Mouse).